A 714-amino-acid chain; its full sequence is GATA zinc finger domain-containing protein 10 (714 aa).

6 disordered regions span residues 28–97 (YIQQ…NKQI), 115–180 (TMPH…QQQQ), 266–362 (MPMN…QQQQ), 394–419 (QQQQ…ESMD), 454–476 (MHLQ…QQIQ), and 528–621 (IQQQ…RRRT). Composition is skewed to low complexity over residues 30–94 (QQQQ…NNNN) and 130–147 (QQQQ…QHPH). Basic residues predominate over residues 148–168 (QQQHPHQQQHPHQQQHPHQQQ). Residues 169-180 (HPHQQQIQQQQQ) are compositionally biased toward low complexity. The span at 271–282 (GGNSRKNSFDMY) shows a compositional bias: polar residues. Composition is skewed to low complexity over residues 283 to 322 (NNNN…NNNI) and 340 to 362 (QHQQ…QQQQ). Low complexity-rich tracts occupy residues 457 to 476 (QQQQ…QQIQ) and 528 to 549 (IQQQ…TPNN). The span at 550–569 (GSPSSSDGKSPVNSNTAITS) shows a compositional bias: polar residues. The segment covering 570–588 (NNNNNNNNNNNNNNNNNNN) has biased composition (low complexity). A GATA-type zinc finger spans residues 631-656 (CHYCEVTETPEWRRGPDGDHTLCNAC). The stretch at 661–694 (AKSQKKLAREKELEKQKELEREKERENTRKHSID) forms a coiled coil. Residues 667-693 (LAREKELEKQKELEREKERENTRKHSI) show a composition bias toward basic and acidic residues. A disordered region spans residues 667–714 (LAREKELEKQKELEREKERENTRKHSIDFMLMNDTSSAPTNSQNPTPN). The segment covering 699–714 (NDTSSAPTNSQNPTPN) has biased composition (polar residues).

In Dictyostelium discoideum (Social amoeba), this protein is GATA zinc finger domain-containing protein 10 (gtaJ).